A 143-amino-acid polypeptide reads, in one-letter code: Transcriptional regulator SlyA (143 aa).

The 134-residue stretch at E2 to R135 folds into the HTH marR-type domain. Positions Q49–E72 form a DNA-binding region, H-T-H motif.

Belongs to the SlyA family. In terms of assembly, homodimer.

In terms of biological role, transcription regulator that can specifically activate or repress expression of target genes. The sequence is that of Transcriptional regulator SlyA from Yersinia enterocolitica serotype O:8 / biotype 1B (strain NCTC 13174 / 8081).